Reading from the N-terminus, the 228-residue chain is Response regulator MprA (228 aa).

A Response regulatory domain is found at 2-116; that stretch reads RILAVDDDRA…ELLARIRALL (115 aa). 4-aspartylphosphate is present on Asp46. A DNA-binding region (ompR/PhoB-type) is located at residues 127-225; sequence SVAMSFSDLT…VRGVGYVLRE (99 aa).

Phosphorylated and dephosphorylated by MprB.

The protein localises to the cytoplasm. Functionally, member of the two-component regulatory system MprB/MprA which contributes to maintaining a balance among several systems involved in stress resistance and is required for establishment and maintenance of persistent infection in the host. Functions as a transcriptional regulator that recognizes a 19-bp nucleotide motif comprizing two loosely conserved 8-bp direct DNA-binding motif repeats separated by a 3-bp spacer region. The chain is Response regulator MprA (mprA) from Mycobacterium leprae (strain TN).